The sequence spans 286 residues: Bifunctional protein FolD (286 aa).

NADP(+)-binding positions include 168 to 170, Thr-195, and Val-236; that span reads GRG.

It belongs to the tetrahydrofolate dehydrogenase/cyclohydrolase family. As to quaternary structure, homodimer.

The catalysed reaction is (6R)-5,10-methylene-5,6,7,8-tetrahydrofolate + NADP(+) = (6R)-5,10-methenyltetrahydrofolate + NADPH. It carries out the reaction (6R)-5,10-methenyltetrahydrofolate + H2O = (6R)-10-formyltetrahydrofolate + H(+). It functions in the pathway one-carbon metabolism; tetrahydrofolate interconversion. In terms of biological role, catalyzes the oxidation of 5,10-methylenetetrahydrofolate to 5,10-methenyltetrahydrofolate and then the hydrolysis of 5,10-methenyltetrahydrofolate to 10-formyltetrahydrofolate. In Mycolicibacterium gilvum (strain PYR-GCK) (Mycobacterium gilvum (strain PYR-GCK)), this protein is Bifunctional protein FolD.